A 79-amino-acid polypeptide reads, in one-letter code: RNA-binding protein KhpA (79 aa).

The 50-residue stretch at 30-79 folds into the KH domain; that stretch reads GRVLEVRVHPDDLGKVIGRNGRTARALRTVVGAIGGRGVRVDLVDVDHVR.

Belongs to the KhpA RNA-binding protein family.

It is found in the cytoplasm. It localises to the nucleoid. A probable RNA-binding protein. The polypeptide is RNA-binding protein KhpA (Streptomyces coelicolor (strain ATCC BAA-471 / A3(2) / M145)).